Reading from the N-terminus, the 99-residue chain is Putative membrane protein insertion efficiency factor (99 aa).

This sequence belongs to the UPF0161 family.

The protein localises to the cell membrane. In terms of biological role, could be involved in insertion of integral membrane proteins into the membrane. This chain is Putative membrane protein insertion efficiency factor, found in Corynebacterium efficiens (strain DSM 44549 / YS-314 / AJ 12310 / JCM 11189 / NBRC 100395).